An 877-amino-acid chain; its full sequence is Alanine--tRNA ligase (877 aa).

4 residues coordinate Zn(2+): His562, His566, Cys664, and His668.

The protein belongs to the class-II aminoacyl-tRNA synthetase family. Zn(2+) serves as cofactor.

The protein localises to the cytoplasm. The catalysed reaction is tRNA(Ala) + L-alanine + ATP = L-alanyl-tRNA(Ala) + AMP + diphosphate. Its function is as follows. Catalyzes the attachment of alanine to tRNA(Ala) in a two-step reaction: alanine is first activated by ATP to form Ala-AMP and then transferred to the acceptor end of tRNA(Ala). Also edits incorrectly charged Ser-tRNA(Ala) and Gly-tRNA(Ala) via its editing domain. This is Alanine--tRNA ligase from Picosynechococcus sp. (strain ATCC 27264 / PCC 7002 / PR-6) (Agmenellum quadruplicatum).